Reading from the N-terminus, the 679-residue chain is Single-strand DNA endonuclease ASTE1 (679 aa).

Residues 351–400 form an interaction with SHLD2 region; that stretch reads TILPTQVENMQQPNAHRISQPIRQIIYGLLLNASPHLDKTSWNALPPQPL. Residues 625–645 are disordered; it reads RSNSKKKRQKKQNTSCSKNRG. Residues 626–635 show a composition bias toward basic residues; that stretch reads SNSKKKRQKK.

The protein belongs to the asteroid family. Interacts with SHLD1, SHLD2, SHLD3, RIF1 and MAD2L2/REV7.

Structure-specific DNA endonuclease that specifically cleaves single-stranded DNA and 3' overhang DNA. Contributes to the control of DNA double-strand break repair choice by antagonizing BRCA1-dependent homologous recombination (HR) and promoting non-homologous end-joining (NHEJ). Recruited to the single-stranded DNA ends by SHLD2 and cleaves the 3' exposed DNA ends, therefore inhibiting DNA end resection (necessary for HR) and promoting DNA end protection (necessary for NHEJ). The polypeptide is Single-strand DNA endonuclease ASTE1 (ASTE1) (Homo sapiens (Human)).